The chain runs to 704 residues: Metabotropic glutamate receptor-like protein K (704 aa).

Residues 1-21 (MIKLILSIILIICFIINSIES) form the signal peptide. Topologically, residues 22–383 (FKMITLTTGP…SKVEFQRSIQ (362 aa)) are extracellular. 8 N-linked (GlcNAc...) asparagine glycosylation sites follow: Asn-66, Asn-104, Asn-256, Asn-286, Asn-308, Asn-337, Asn-343, and Asn-368. A helical membrane pass occupies residues 384 to 404 (IGFSIVSGLLIGFVILMMIGI). Residues 405-419 (VKYQDTPSIRSASPS) are Cytoplasmic-facing. The helical transmembrane segment at 420–440 (FLNLTLLGGVIIFIGIIVWVA) threads the bilayer. Residues 441–455 (PISTHQCNARFWLVT) lie on the Extracellular side of the membrane. The chain crosses the membrane as a helical span at residues 456–476 (IGFSTLIGSLVVKNIRIWLIF). The Cytoplasmic portion of the chain corresponds to 477 to 492 (DNPELKIRTITNNQLY). The chain crosses the membrane as a helical span at residues 493–513 (PWVGLCLVINIVLMSIITTVG). Topologically, residues 514–541 (DLKAIEAQGIDSLGKFEYMTICKMNYTG) are extracellular. An N-linked (GlcNAc...) asparagine glycan is attached at Asn-538. Residues 542–562 (AATLYSILAYFGTLLLVGVFV) traverse the membrane as a helical segment. At 563 to 578 (SWKIRIVHIEEFSECT) the chain is on the cytoplasmic side. A helical membrane pass occupies residues 579 to 599 (AIAKTLYSISFCLFVIVPLMI). The Extracellular segment spans residues 600–608 (SPQDKQSET). Residues 609–629 (IILCVTGIFITTGALLIFFLP) form a helical membrane-spanning segment. Residues 630-704 (KFWRIFGNEK…NESSLSNETK (75 aa)) lie on the Cytoplasmic side of the membrane. 2 disordered regions span residues 657-677 (ARAE…SKSS) and 685-704 (SGIE…NETK).

This sequence in the N-terminal section; belongs to the BMP lipoprotein family. It in the C-terminal section; belongs to the G-protein coupled receptor 3 family. GABA-B receptor subfamily.

It is found in the membrane. The sequence is that of Metabotropic glutamate receptor-like protein K (grlK) from Dictyostelium discoideum (Social amoeba).